The chain runs to 402 residues: Fructose-1,6-bisphosphatase, chloroplastic (402 aa).

The transit peptide at 1-50 directs the protein to the chloroplast; sequence MAAATASTQLIFSKPCSPSRLCPFQLCVFDTKQVLSSGRRRHVGGSGVRC. Residues E127, E156, D177, L179, and D180 each coordinate Mg(2+). Position 180–183 (180–183) interacts with substrate; the sequence is DGSS. C221 and C226 are oxidised to a cystine. Residues N285, Y317, Y335, Y337, and K347 each contribute to the substrate site. E353 provides a ligand contact to Mg(2+).

Belongs to the FBPase class 1 family. Homotetramer. The cofactor is Mg(2+).

The protein localises to the plastid. It localises to the chloroplast. The catalysed reaction is beta-D-fructose 1,6-bisphosphate + H2O = beta-D-fructose 6-phosphate + phosphate. It functions in the pathway carbohydrate biosynthesis; Calvin cycle. The polypeptide is Fructose-1,6-bisphosphatase, chloroplastic (FBP) (Glycine max (Soybean)).